The chain runs to 330 residues: Cathepsin S (330 aa).

A signal peptide spans 1 to 17 (MAVLGAPGVLCDNGATA). The propeptide at 18–112 (ERPTLDHHWD…GTLKSSSNQT (95 aa)) is activation peptide. N-linked (GlcNAc...) asparagine glycans are attached at residues asparagine 100 and asparagine 110. Intrachain disulfides connect cysteine 124/cysteine 222, cysteine 134/cysteine 179, cysteine 168/cysteine 211, and cysteine 271/cysteine 319. Cysteine 137 is an active-site residue. Residues histidine 277 and asparagine 297 contribute to the active site.

Belongs to the peptidase C1 family. Monomer. Highest levels occur in the ileum followed by spleen, brain, thyroid, ovary and uterus. Low levels are found in the liver, kidney, jejunum and lung with lowest levels in the heart.

The protein resides in the lysosome. It localises to the secreted. The protein localises to the cytoplasmic vesicle. It is found in the phagosome. It catalyses the reaction Similar to cathepsin L, but with much less activity on Z-Phe-Arg-|-NHMec, and more activity on the Z-Val-Val-Arg-|-Xaa compound.. Functionally, thiol protease. Key protease responsible for the removal of the invariant chain from MHC class II molecules and MHC class II antigen presentation. The bond-specificity of this proteinase is in part similar to the specificities of cathepsin L. In Rattus norvegicus (Rat), this protein is Cathepsin S (Ctss).